The sequence spans 292 residues: UPF0696 protein C11orf68 homolog (292 aa).

Residues 1 to 10 show a composition bias toward low complexity; the sequence is MAAAAAAVAG. The segment at 1–60 is disordered; the sequence is MAAAAAAVAGAGRGGGGGAEPRQERSRARGWAGAERSEGRRMEPGEELEEEDSPGGREDG. Positions 35–44 are enriched in basic and acidic residues; sequence ERSEGRRMEP.

Belongs to the UPF0696 family.

The polypeptide is UPF0696 protein C11orf68 homolog (Bos taurus (Bovine)).